Here is a 422-residue protein sequence, read N- to C-terminus: Histidine--tRNA ligase (422 aa).

The protein belongs to the class-II aminoacyl-tRNA synthetase family. Homodimer.

It is found in the cytoplasm. It catalyses the reaction tRNA(His) + L-histidine + ATP = L-histidyl-tRNA(His) + AMP + diphosphate + H(+). The polypeptide is Histidine--tRNA ligase (Aliivibrio fischeri (strain ATCC 700601 / ES114) (Vibrio fischeri)).